Reading from the N-terminus, the 374-residue chain is Queuine tRNA-ribosyltransferase (374 aa).

The active-site Proton acceptor is the Asp89. Substrate is bound by residues 89 to 93 (DSGGF), Asp143, Gln187, and Gly214. The segment at 245–251 (GVGKPED) is RNA binding. The active-site Nucleophile is the Asp264. An RNA binding; important for wobble base 34 recognition region spans residues 269 to 273 (TRNAR). 4 residues coordinate Zn(2+): Cys302, Cys304, Cys307, and His333.

This sequence belongs to the queuine tRNA-ribosyltransferase family. As to quaternary structure, homodimer. Within each dimer, one monomer is responsible for RNA recognition and catalysis, while the other monomer binds to the replacement base PreQ1. Zn(2+) is required as a cofactor.

The catalysed reaction is 7-aminomethyl-7-carbaguanine + guanosine(34) in tRNA = 7-aminomethyl-7-carbaguanosine(34) in tRNA + guanine. It participates in tRNA modification; tRNA-queuosine biosynthesis. Functionally, catalyzes the base-exchange of a guanine (G) residue with the queuine precursor 7-aminomethyl-7-deazaguanine (PreQ1) at position 34 (anticodon wobble position) in tRNAs with GU(N) anticodons (tRNA-Asp, -Asn, -His and -Tyr). Catalysis occurs through a double-displacement mechanism. The nucleophile active site attacks the C1' of nucleotide 34 to detach the guanine base from the RNA, forming a covalent enzyme-RNA intermediate. The proton acceptor active site deprotonates the incoming PreQ1, allowing a nucleophilic attack on the C1' of the ribose to form the product. After dissociation, two additional enzymatic reactions on the tRNA convert PreQ1 to queuine (Q), resulting in the hypermodified nucleoside queuosine (7-(((4,5-cis-dihydroxy-2-cyclopenten-1-yl)amino)methyl)-7-deazaguanosine). The protein is Queuine tRNA-ribosyltransferase of Shewanella baltica (strain OS223).